The following is a 476-amino-acid chain: Ribulose bisphosphate carboxylase large chain (476 aa).

Substrate is bound by residues asparagine 124 and threonine 174. The active-site Proton acceptor is lysine 176. Residue lysine 178 coordinates substrate. The Mg(2+) site is built by lysine 202, aspartate 204, and glutamate 205. Lysine 202 carries the N6-carboxylysine modification. Histidine 295 serves as the catalytic Proton acceptor. Residues arginine 296, histidine 328, and serine 380 each coordinate substrate.

This sequence belongs to the RuBisCO large chain family. Type I subfamily. As to quaternary structure, heterohexadecamer of 8 large chains and 8 small chains; disulfide-linked. The disulfide link is formed within the large subunit homodimers. It depends on Mg(2+) as a cofactor. Post-translationally, the disulfide bond which can form in the large chain dimeric partners within the hexadecamer appears to be associated with oxidative stress and protein turnover.

The protein resides in the carboxysome. It catalyses the reaction 2 (2R)-3-phosphoglycerate + 2 H(+) = D-ribulose 1,5-bisphosphate + CO2 + H2O. It carries out the reaction D-ribulose 1,5-bisphosphate + O2 = 2-phosphoglycolate + (2R)-3-phosphoglycerate + 2 H(+). RuBisCO catalyzes two reactions: the carboxylation of D-ribulose 1,5-bisphosphate, the primary event in carbon dioxide fixation, as well as the oxidative fragmentation of the pentose substrate in the photorespiration process. Both reactions occur simultaneously and in competition at the same active site. This is Ribulose bisphosphate carboxylase large chain from Trichodesmium erythraeum (strain IMS101).